The primary structure comprises 420 residues: Tol-Pal system protein TolB (420 aa).

The N-terminal stretch at 1–21 (MKLFVHLVLFISLFIPYFTKA) is a signal peptide.

The protein belongs to the TolB family. The Tol-Pal system is composed of five core proteins: the inner membrane proteins TolA, TolQ and TolR, the periplasmic protein TolB and the outer membrane protein Pal. They form a network linking the inner and outer membranes and the peptidoglycan layer.

Its subcellular location is the periplasm. Part of the Tol-Pal system, which plays a role in outer membrane invagination during cell division and is important for maintaining outer membrane integrity. This chain is Tol-Pal system protein TolB, found in Wolbachia pipientis wMel.